Consider the following 361-residue polypeptide: sn-glycerol-3-phosphate import ATP-binding protein UgpC (361 aa).

One can recognise an ABC transporter domain in the interval 4–235 (LSFRNLKKTY…PASTFVAGFI (232 aa)). 37–44 (GPSGCGKS) contacts ATP.

It belongs to the ABC transporter superfamily. sn-glycerol-3-phosphate importer (TC 3.A.1.1.3) family. The complex is composed of two ATP-binding proteins (UgpC), two transmembrane proteins (UgpA and UgpE) and a solute-binding protein (UgpB).

The protein localises to the cell inner membrane. The enzyme catalyses sn-glycerol 3-phosphate(out) + ATP + H2O = sn-glycerol 3-phosphate(in) + ADP + phosphate + H(+). Part of the ABC transporter complex UgpBAEC involved in sn-glycerol-3-phosphate (G3P) import. Responsible for energy coupling to the transport system. The sequence is that of sn-glycerol-3-phosphate import ATP-binding protein UgpC from Bordetella avium (strain 197N).